Consider the following 692-residue polypeptide: Proprotein convertase subtilisin/kexin type 9 (692 aa).

Positions 1–30 are cleaved as a signal peptide; the sequence is MGTVSSRRSWWPLPLLLLLLLLLGPAGARA. The propeptide occupies 31–152; it reads QEDEDGDYEE…IEEDSSVFAQ (122 aa). A Sulfotyrosine modification is found at Y38. At S47 the chain carries Phosphoserine. Positions 77-149 constitute an Inhibitor I9 domain; it reads TYVVVLKEET…VDYIEEDSSV (73 aa). The 307-residue stretch at 155 to 461 folds into the Peptidase S8 domain; sequence PWNLERITPP…GWQLFCRTVW (307 aa). Catalysis depends on charge relay system residues D186 and H226. Intrachain disulfides connect C223-C255 and C323-C358. S386 (charge relay system) is an active-site residue. Positions 450–692 are C-terminal domain; sequence GAGWQLFCRT…HLAQASQELQ (243 aa). Cystine bridges form between C457–C527, C477–C526, and C486–C509. A glycan (N-linked (GlcNAc...) asparagine) is linked at N533. Cystine bridges form between C534/C601, C552/C600, C562/C588, C608/C679, C626/C678, and C635/C654. S688 is subject to Phosphoserine.

Belongs to the peptidase S8 family. As to quaternary structure, monomer. Can self-associate to form dimers and higher multimers which may have increased LDLR degrading activity. The precursor protein but not the mature protein may form multimers. Interacts with APOB, VLDLR, LRP8/APOER2 and BACE1. The full-length immature form (pro-PCSK9) interacts with SCNN1A, SCNN1B and SCNN1G. The pro-PCSK9 form (via C-terminal domain) interacts with LDLR. Interacts (via the C-terminal domain) with ANXA2 (via repeat Annexin 1); the interaction inhibits the degradation of LDLR. Requires Ca(2+) as cofactor. Post-translationally, cleavage by furin and PCSK5 generates a truncated inactive protein that is unable to induce LDLR degradation. Undergoes autocatalytic cleavage in the endoplasmic reticulum to release the propeptide from the N-terminus and the cleavage of the propeptide is strictly required for its maturation and activation. The cleaved propeptide however remains associated with the catalytic domain through non-covalent interactions, preventing potential substrates from accessing its active site. As a result, it is secreted from cells as a propeptide-containing, enzymatically inactive protein. In terms of processing, phosphorylation protects the propeptide against proteolysis.

It localises to the cytoplasm. The protein localises to the secreted. It is found in the endosome. Its subcellular location is the lysosome. The protein resides in the cell surface. It localises to the endoplasmic reticulum. The protein localises to the golgi apparatus. Its activity is regulated as follows. Its proteolytic activity is autoinhibited by the non-covalent binding of the propeptide to the catalytic domain. Inhibited by EGTA. Its function is as follows. Crucial player in the regulation of plasma cholesterol homeostasis. Binds to low-density lipid receptor family members: low density lipoprotein receptor (LDLR), very low density lipoprotein receptor (VLDLR), apolipoprotein E receptor (LRP1/APOER) and apolipoprotein receptor 2 (LRP8/APOER2), and promotes their degradation in intracellular acidic compartments. Acts via a non-proteolytic mechanism to enhance the degradation of the hepatic LDLR through a clathrin LDLRAP1/ARH-mediated pathway. May prevent the recycling of LDLR from endosomes to the cell surface or direct it to lysosomes for degradation. Can induce ubiquitination of LDLR leading to its subsequent degradation. Inhibits intracellular degradation of APOB via the autophagosome/lysosome pathway in a LDLR-independent manner. Involved in the disposal of non-acetylated intermediates of BACE1 in the early secretory pathway. Inhibits epithelial Na(+) channel (ENaC)-mediated Na(+) absorption by reducing ENaC surface expression primarily by increasing its proteasomal degradation. Regulates neuronal apoptosis via modulation of LRP8/APOER2 levels and related anti-apoptotic signaling pathways. This Pan paniscus (Pygmy chimpanzee) protein is Proprotein convertase subtilisin/kexin type 9 (PCSK9).